We begin with the raw amino-acid sequence, 243 residues long: Probable transcriptional regulatory protein LSEI_1022 (243 aa).

A disordered region spans residues 1 to 23 (MSGHSKWHNIQGRKNAQDSKRGK).

The protein belongs to the TACO1 family.

It is found in the cytoplasm. This is Probable transcriptional regulatory protein LSEI_1022 from Lacticaseibacillus paracasei (strain ATCC 334 / BCRC 17002 / CCUG 31169 / CIP 107868 / KCTC 3260 / NRRL B-441) (Lactobacillus paracasei).